Reading from the N-terminus, the 294-residue chain is Glycine-rich protein 2 (294 aa).

The first 20 residues, 1–20 (MKMWFRLATFVTLIIEFAHC), serve as a signal peptide directing secretion. Positions 205–221 (TGSQTGAAANGTSAGAA) are enriched in low complexity. Residues 205–225 (TGSQTGAAANGTSAGAAVRGG) form a disordered region.

Nacreous layer of shell (at protein level). Expressed primarily in the mantle with highest level in the mantle pallium and lower level in the mantle edge.

Its subcellular location is the secreted. This is Glycine-rich protein 2 from Pinctada maxima (Silver-lipped pearl oyster).